A 196-amino-acid polypeptide reads, in one-letter code: Large ribosomal subunit protein mL66 (196 aa).

The transit peptide at 1-34 directs the protein to the mitochondrion; the sequence is MAALRRLVSGCGRQLQAFLAGPAATGWLWLPARG.

The protein belongs to the bacterial ribosomal protein bS18 family. Mitochondrion-specific ribosomal protein mL66 subfamily. In terms of assembly, component of the mitochondrial ribosome small subunit (28S) which comprises a 12S rRNA and about 30 distinct proteins.

It localises to the mitochondrion. The chain is Large ribosomal subunit protein mL66 (Mrps18a) from Mus musculus (Mouse).